A 265-amino-acid polypeptide reads, in one-letter code: Hydroxyethylthiazole kinase (265 aa).

Met-50 contacts substrate. The ATP site is built by Arg-125 and Thr-171. Gly-198 is a binding site for substrate.

Belongs to the Thz kinase family. Mg(2+) is required as a cofactor.

The catalysed reaction is 5-(2-hydroxyethyl)-4-methylthiazole + ATP = 4-methyl-5-(2-phosphooxyethyl)-thiazole + ADP + H(+). Its pathway is cofactor biosynthesis; thiamine diphosphate biosynthesis; 4-methyl-5-(2-phosphoethyl)-thiazole from 5-(2-hydroxyethyl)-4-methylthiazole: step 1/1. In terms of biological role, catalyzes the phosphorylation of the hydroxyl group of 4-methyl-5-beta-hydroxyethylthiazole (THZ). This chain is Hydroxyethylthiazole kinase, found in Salmonella typhimurium (strain LT2 / SGSC1412 / ATCC 700720).